The chain runs to 901 residues: Quinate repressor protein (901 aa).

A sufficient for repression region spans residues 1-88 (MSILVRPPKR…DSLQTRRKFP (88 aa)). 2 disordered regions span residues 26 to 59 (LRDF…DGSR) and 878 to 901 (EEQG…GQPM). A compositionally biased stretch (polar residues) spans 31 to 43 (QGNSASTPINTSA).

In the N-terminal section; belongs to the shikimate kinase family. This sequence in the 2nd section; belongs to the type-I 3-dehydroquinase family. It in the C-terminal section; belongs to the shikimate dehydrogenase family. Interacts with qutA; transcriptional activator of the quinate utilization pathway genes.

Its function is as follows. Multi-domain repressor protein that negatively regulates transcription of the quinate utilization pathway genes. May mediate its repressor activity by binding directly to the qutA activator protein. The sequence is that of Quinate repressor protein (qutR) from Emericella nidulans (strain FGSC A4 / ATCC 38163 / CBS 112.46 / NRRL 194 / M139) (Aspergillus nidulans).